A 657-amino-acid polypeptide reads, in one-letter code: Glycogen debranching enzyme (657 aa).

Catalysis depends on aspartate 336, which acts as the Nucleophile. The active-site Proton donor is the glutamate 371. The tract at residues alanine 460–lysine 479 is disordered.

The protein belongs to the glycosyl hydrolase 13 family.

It carries out the reaction Hydrolysis of (1-&gt;6)-alpha-D-glucosidic linkages to branches with degrees of polymerization of three or four glucose residues in limit dextrin.. It participates in glycan degradation; glycogen degradation. Removes maltotriose and maltotetraose chains that are attached by 1,6-alpha-linkage to the limit dextrin main chain, generating a debranched limit dextrin. This is Glycogen debranching enzyme from Shigella flexneri serotype 5b (strain 8401).